A 146-amino-acid polypeptide reads, in one-letter code: uncharacterized protein (146 aa).

Residues 7–27 form a helical membrane-spanning segment; that stretch reads FVLSITIVLVILIIIAFIWYN.

This sequence belongs to the asfivirus E146L family.

It is found in the host membrane. Its subcellular location is the virion. This is an uncharacterized protein from Ornithodoros (relapsing fever ticks).